The following is a 324-amino-acid chain: Glyoxylate/hydroxypyruvate reductase B (324 aa).

Residues Arg-237 and Glu-266 contribute to the active site. The active-site Proton donor is the His-285.

Belongs to the D-isomer specific 2-hydroxyacid dehydrogenase family. GhrB subfamily. As to quaternary structure, homodimer.

It is found in the cytoplasm. It catalyses the reaction glycolate + NADP(+) = glyoxylate + NADPH + H(+). The enzyme catalyses (R)-glycerate + NAD(+) = 3-hydroxypyruvate + NADH + H(+). It carries out the reaction (R)-glycerate + NADP(+) = 3-hydroxypyruvate + NADPH + H(+). Functionally, catalyzes the NADPH-dependent reduction of glyoxylate and hydroxypyruvate into glycolate and glycerate, respectively. The protein is Glyoxylate/hydroxypyruvate reductase B of Shigella flexneri.